A 167-amino-acid chain; its full sequence is uncharacterized protein (167 aa).

Belongs to the A.longa ORF167/ORF288 family.

It is found in the plastid. This is an uncharacterized protein from Euglena longa (Euglenophycean alga).